We begin with the raw amino-acid sequence, 436 residues long: Capsid protein (436 aa).

Residues 326–370 (RDYSQRGTVPTAPSRQQVESEARAPYPKTNRPPTTADILPGDLDS) form a disordered region. Polar residues predominate over residues 330 to 344 (QRGTVPTAPSRQQVE).

It belongs to the anelloviridae capsid protein family.

Its subcellular location is the virion. Self-assembles to form an icosahedral capsid with a T=1 symmetry, about 30 nm in diameter, and consisting of 60 capsid proteins. The capsid encapsulates the genomic DNA. Capsid protein is involved in attachment and entry into the host cell. The sequence is that of Capsid protein from Torque teno felis virus (isolate Fc-TTV4).